The primary structure comprises 819 residues: MRYDPGLIEEKWQKFWKNEQVFKAEEDETKTKYYVLDMFPYPSGAGLHVGHLIGYTATDIVARYKRAQGFSVLHPMGWDSFGLPAEQYAIRTGTHPRETTEKNIANFKKQLTAMGFSYDESREFATSDPEYYKWTQKLFLILYEKGLAYMADMAVNYCPELGTVLSNEEIENGFSVDGGYPVERRMLRQWVLRITAFADQLLEGLDELDWPESVKQLQKNWIGKSSGASVNFATEHGAIEVFTTRPDTLIGVSFLALAPEHPLVDLLTSDEQKAVVAQYIKETQSKSERDRISEMKTKSGVFTGSYAKHPVTHELIPIWIADYVLIGFGSGAVMGVPAHDERDLLFAEQFNLPVVSVLNKEGVCINSCCEGFHLDGLSGEEAKQYVINFLEENHLGAAKIAYKLRDWLFSRQRYWGEPIPIIHFEDGSCRPLRDYELPLLPPEIQDYRPEGVGQGPLAKVREWVQVFDTETQRAGKRETHTMPQWAGSCWYYLRFCDAHNSAAPWAKEKEQYWMPVDLYIGGAEHAVLHLLYARFWHQIFYEAGIVSTPEPFKKLVNQGLVLATSYRIPGKGYIYPEIAKEENGKWVAPSGEELDVRQEKMSKSKLNGVDPQILIDEFGADAVRMYAMFSGPLDKNKLWSNQGVAGCRRFLNRFYEMVSSDRVKEDNNFEGLSLAHKLVQRVTDAIEKLSLNTIPSSFMEFINDFVKLAVYPKSAVEMAVRALAPIAPHISEELWVLLGNSPGVQKSGWPSVLPEYLEGQTVTIVVQVNGKLRARLDIMKDASKEEVLALARESASKYLEGCEVKEAIFVPARLVNFVV.

The short motif at 40–51 is the 'HIGH' region element; the sequence is PYPSGAGLHVGH. The short motif at 600–604 is the 'KMSKS' region element; that stretch reads KMSKS. An ATP-binding site is contributed by K603.

The protein belongs to the class-I aminoacyl-tRNA synthetase family.

It localises to the cytoplasm. It catalyses the reaction tRNA(Leu) + L-leucine + ATP = L-leucyl-tRNA(Leu) + AMP + diphosphate. This is Leucine--tRNA ligase from Chlamydia trachomatis serovar A (strain ATCC VR-571B / DSM 19440 / HAR-13).